The primary structure comprises 760 residues: 5-methyltetrahydropteroyltriglutamate--homocysteine methyltransferase (760 aa).

5-methyltetrahydropteroyltri-L-glutamate contacts are provided by residues 15 to 18 (RELK) and K114. Residues 436–438 (IGS) and E489 each bind L-homocysteine. L-methionine is bound by residues 436 to 438 (IGS) and E489. Residues 520-521 (RC) and W566 contribute to the 5-methyltetrahydropteroyltri-L-glutamate site. D604 lines the L-homocysteine pocket. D604 is a binding site for L-methionine. Residue E610 participates in 5-methyltetrahydropteroyltri-L-glutamate binding. Zn(2+) is bound by residues H646, C648, and E670. The Proton donor role is filled by H699. C731 is a binding site for Zn(2+).

Belongs to the vitamin-B12 independent methionine synthase family. The cofactor is Zn(2+).

It carries out the reaction 5-methyltetrahydropteroyltri-L-glutamate + L-homocysteine = tetrahydropteroyltri-L-glutamate + L-methionine. The protein operates within amino-acid biosynthesis; L-methionine biosynthesis via de novo pathway; L-methionine from L-homocysteine (MetE route): step 1/1. In terms of biological role, catalyzes the transfer of a methyl group from 5-methyltetrahydrofolate to homocysteine resulting in methionine formation. The polypeptide is 5-methyltetrahydropteroyltriglutamate--homocysteine methyltransferase (Shewanella oneidensis (strain ATCC 700550 / JCM 31522 / CIP 106686 / LMG 19005 / NCIMB 14063 / MR-1)).